The primary structure comprises 522 residues: WEB family protein At2g38370 (522 aa).

A disordered region spans residues M1–F32. 2 coiled-coil regions span residues E77–E264 and A299–N376. 2 disordered regions span residues S374 to E397 and M458 to K493. Positions T473–R486 are enriched in basic and acidic residues.

It belongs to the WEB family.

The chain is WEB family protein At2g38370 from Arabidopsis thaliana (Mouse-ear cress).